Consider the following 438-residue polypeptide: Aspartate--tRNA(Asp/Asn) ligase (438 aa).

Glu-176 lines the L-aspartate pocket. The interval 198-201 (QLYK) is aspartate. L-aspartate is bound at residue Arg-220. ATP is bound by residues 220-222 (RAE), 228-230 (RHL), and Glu-361. Residues Glu-361 and Ser-364 each coordinate Mg(2+). Residues Ser-364 and Arg-368 each coordinate L-aspartate. 409 to 412 (GIER) provides a ligand contact to ATP.

Belongs to the class-II aminoacyl-tRNA synthetase family. Type 2 subfamily. In terms of assembly, homodimer. The cofactor is Mg(2+).

The protein localises to the cytoplasm. It catalyses the reaction tRNA(Asx) + L-aspartate + ATP = L-aspartyl-tRNA(Asx) + AMP + diphosphate. Functionally, aspartyl-tRNA synthetase with relaxed tRNA specificity since it is able to aspartylate not only its cognate tRNA(Asp) but also tRNA(Asn). Reaction proceeds in two steps: L-aspartate is first activated by ATP to form Asp-AMP and then transferred to the acceptor end of tRNA(Asp/Asn). This is Aspartate--tRNA(Asp/Asn) ligase from Methanococcus aeolicus (strain ATCC BAA-1280 / DSM 17508 / OCM 812 / Nankai-3).